The following is a 295-amino-acid chain: N-acetylmuramic acid 6-phosphate etherase (295 aa).

Positions 54-217 (VIASFRQGGR…STASMIGIGK (164 aa)) constitute an SIS domain. The Proton donor role is filled by glutamate 82. Glutamate 113 is a catalytic residue.

The protein belongs to the GCKR-like family. MurNAc-6-P etherase subfamily. Homodimer.

The enzyme catalyses N-acetyl-D-muramate 6-phosphate + H2O = N-acetyl-D-glucosamine 6-phosphate + (R)-lactate. The protein operates within amino-sugar metabolism; N-acetylmuramate degradation. Its function is as follows. Specifically catalyzes the cleavage of the D-lactyl ether substituent of MurNAc 6-phosphate, producing GlcNAc 6-phosphate and D-lactate. The polypeptide is N-acetylmuramic acid 6-phosphate etherase (Geobacillus sp. (strain WCH70)).